The primary structure comprises 307 residues: Heme A synthase (307 aa).

At 1–8 (MQHNRYLK) the chain is on the cytoplasmic side. Residues 9–29 (WFAVAATVGMLLILLGGALVT) traverse the membrane as a helical segment. Over 30–56 (KTDSGLGCGRNWPDCNGSLIPKEITPE) the chain is Extracellular. C37 and C44 form a disulfide bridge. The chain crosses the membrane as a helical span at residues 57–77 (VLIEFSHRLVTGVVSISILVL). Residue E60 is part of the active site. H63 lines the heme o pocket. Topologically, residues 78–92 (TVWTWRKLGHIREVK) are cytoplasmic. The helical transmembrane segment at 93 to 113 (LLGFLAMFFLIAQALIGAAQV) threads the bilayer. The Extracellular segment spans residues 114-123 (LWGQGDFILA). The chain crosses the membrane as a helical span at residues 124–144 (LHFGISLISFAAVLLLSMIVF). Position 125 (H125) interacts with heme o. At 145–161 (EVDRKFDADNVFIGKKL) the chain is on the cytoplasmic side. A helical transmembrane segment spans residues 162–182 (RWHTIAVTIYSYLVVYTGALV). The Extracellular portion of the chain corresponds to 183–218 (RHTDSSLICPDWPFCYNETPLASPNNMYEWVQMGHR). Residues C191 and C197 are joined by a disulfide bond. H217 serves as a coordination point for heme b. The chain crosses the membrane as a helical span at residues 219–239 (LAVLIIFIWIAYITWHAVKEY). At 240 to 247 (KNQRVVYY) the chain is on the cytoplasmic side. The helical transmembrane segment at 248-268 (GWIIAFTIVFLQVIAGMLVVL) threads the bilayer. Topologically, residues 269–276 (TKLNLTVA) are extracellular. The chain crosses the membrane as a helical span at residues 277 to 297 (LMHSLLISLLFGLLCYMIMLV). Residue H279 participates in heme b binding. Residues 298-307 (ARSNYNEKMK) are Cytoplasmic-facing.

The protein belongs to the COX15/CtaA family. Type 1 subfamily. Interacts with CtaB. The cofactor is heme b.

The protein localises to the cell membrane. The catalysed reaction is Fe(II)-heme o + 2 A + H2O = Fe(II)-heme a + 2 AH2. It participates in porphyrin-containing compound metabolism; heme A biosynthesis; heme A from heme O: step 1/1. In terms of biological role, catalyzes the conversion of heme O to heme A by two successive hydroxylations of the methyl group at C8. The first hydroxylation forms heme I, the second hydroxylation results in an unstable dihydroxymethyl group, which spontaneously dehydrates, resulting in the formyl group of heme A. The polypeptide is Heme A synthase (Lysinibacillus sphaericus (strain C3-41)).